The primary structure comprises 618 residues: MGSGLFKPRVHPDLRDVFSKMSFFDKIGFLFIHAFDKRNLWHKVPVPIGLLYLNTRRTLLEKYNLLAVGRSSHGALFDPKEFLYRTEDGKYNDPHNAEAGSQNTFFGRNMEPVDQQDELMSPDPFVVATKLLARREYKDTGKQFNILAAAWIQFMVHDWMDHMEDTGQIGITAPKEVANECPLKSFKFHPTKELPTNSDGIKIGHYNIRTAWWDGSAVYGNNEERAEKLRTYVDGKLVIGDDGLLLHKENGVALSGDIRNSWAGVSILQALFVKEHNAVCDAIKEEHPNLSDEELYRYAKLVTSAVIAKVHTIDWTVELLKTKTMRAAMRANWYGLLGKKIKDTFGHIGGPILGGLVGLKKPNNHGVPYSLTEEFTSVYRMHSLIPSTLKLRDPTGQPDANNSPPCLEDIDIGEMIGLKGEEQLSKIGFEKQALSMGYQACGALELWNYPSFFRNLIPQNLDGTNRSDRIDLAALEVYRDRERSVPRYNEFRRRLFLIPIKSWEDLTSDKDAIETIRAIYGDDVEKLDLLVGLMAEKKIKGFAISETAFNIFILMASRRLEADRFFTSNFNEETYTKKGMQWVKTTEGLRDVINRHYPEITAKWMKSSSAFSVWDADY.

The active-site Proton acceptor is the histidine 157. Residue aspartate 158 coordinates Ca(2+). Residue histidine 162 coordinates heme b. Ca(2+) contacts are provided by threonine 210, tryptophan 212, aspartate 214, and serine 216. Hexadecanoate is bound at residue histidine 311. Positions 382, 479, and 483 each coordinate heme b. Residue glutamate 599 participates in hexadecanoate binding.

The protein belongs to the peroxidase family. Heme b serves as cofactor. The cofactor is Ca(2+).

It catalyses the reaction a 1,2-saturated fatty acid + O2 = a (2R)-2-hydroperoxy fatty acid. The enzyme catalyses (9Z,12Z)-octadecadienoate + O2 = (2R,9Z,12Z)-2-hydroperoxyoctadecadienoate. The catalysed reaction is hexadecanoate + O2 = (2R)-2-hydroperoxyhexadecanoate. It carries out the reaction (9Z,12Z,15Z)-octadecatrienoate + O2 = (R)-2-hydroperoxy-(9Z,12Z,15Z)-octadecatrienoate. It catalyses the reaction tetradecanoate + O2 = (2R)-2-hydroperoxytetradecanoate. The enzyme catalyses octadecanoate + O2 = (2R)-2-hydroperoxyoctadecanoate. The catalysed reaction is (9Z)-octadecenoate + O2 = (2R,9Z)-2-hydroperoxyoctadecenoate. In terms of biological role, alpha-dioxygenase that catalyzes the primary oxygenation step of a variety of 14-20 carbon fatty acids, containing up to three unsaturated bonds, into their corresponding 2R-hydroperoxides. Involved in the production of oxylipins that function in cell signaling, wound healing, and protection from infection. The sequence is that of Alpha-dioxygenase PIOX from Oryza sativa subsp. japonica (Rice).